The chain runs to 52 residues: Conotoxin Cal9.2d (52 aa).

The propeptide occupies 1-6 (KRGVTL). 3 disulfides stabilise this stretch: C14–C31, C19–C41, and C21–C46.

Expressed by the venom duct.

It is found in the secreted. Its function is as follows. Probable neurotoxin with unknown target. Possibly targets ion channels. This is Conotoxin Cal9.2d from Californiconus californicus (California cone).